Reading from the N-terminus, the 381-residue chain is Outer membrane protein assembly factor BamB (381 aa).

Positions 1–22 (MNLLKRYAAPVACAAAVLVFAA) are cleaved as a signal peptide. C23 carries the N-palmitoyl cysteine lipid modification. C23 is lipidated: S-diacylglycerol cysteine.

This sequence belongs to the BamB family. Part of the Bam complex.

The protein localises to the cell outer membrane. Functionally, part of the outer membrane protein assembly complex, which is involved in assembly and insertion of beta-barrel proteins into the outer membrane. In Burkholderia pseudomallei (strain K96243), this protein is Outer membrane protein assembly factor BamB.